Reading from the N-terminus, the 360-residue chain is Peptide chain release factor 1 (360 aa).

Gln235 bears the N5-methylglutamine mark. The disordered stretch occupies residues 285–313 (KRQQAEASTRRNLLGSGDRSDRNRTYNFP).

This sequence belongs to the prokaryotic/mitochondrial release factor family. Post-translationally, methylated by PrmC. Methylation increases the termination efficiency of RF1.

The protein resides in the cytoplasm. Its function is as follows. Peptide chain release factor 1 directs the termination of translation in response to the peptide chain termination codons UAG and UAA. The chain is Peptide chain release factor 1 from Shigella boydii serotype 18 (strain CDC 3083-94 / BS512).